A 265-amino-acid polypeptide reads, in one-letter code: Lipopolysaccharide core heptose(I) kinase WaaP (265 aa).

The active site involves D162.

It belongs to the protein kinase superfamily. KdkA/RfaP family. Requires Mg(2+) as cofactor.

The protein resides in the cell inner membrane. It carries out the reaction an L-alpha-D-Hep-(1-&gt;3)-L-alpha-D-Hep-(1-&gt;5)-[alpha-Kdo-(2-&gt;4)]-alpha-Kdo-(2-&gt;6)-lipid A + ATP = an L-alpha-D-Hep-(1-&gt;3)-4-O-phospho-L-alpha-D-Hep-(1-&gt;5)-[alpha-Kdo-(2-&gt;4)]-alpha-Kdo-(2-&gt;6)-lipid A + ADP + H(+). The enzyme catalyses L-alpha-D-Hep-(1-&gt;3)-L-alpha-D-Hep-(1-&gt;5)-[alpha-Kdo-(2-&gt;4)]-alpha-Kdo-(2-&gt;6)-lipid A (E. coli) + ATP = L-alpha-D-Hep-(1-&gt;3)-4-O-phospho-L-alpha-D-Hep-(1-&gt;5)-[alpha-Kdo-(2-&gt;4)]-alpha-Kdo-(2-&gt;6)-lipid A (E. coli) + ADP + H(+). It participates in bacterial outer membrane biogenesis; LPS core biosynthesis. Kinase involved in the biosynthesis of the core oligosaccharide region of lipopolysaccharide (LPS). Catalyzes the phosphorylation of heptose I (HepI), the first heptose added to the Kdo2-lipid A module. The polypeptide is Lipopolysaccharide core heptose(I) kinase WaaP (Escherichia coli).